The chain runs to 468 residues: ATP synthase subunit beta (468 aa).

155-162 (GGAGVGKT) serves as a coordination point for ATP.

The protein belongs to the ATPase alpha/beta chains family. In terms of assembly, F-type ATPases have 2 components, CF(1) - the catalytic core - and CF(0) - the membrane proton channel. CF(1) has five subunits: alpha(3), beta(3), gamma(1), delta(1), epsilon(1). CF(0) has three main subunits: a(1), b(2) and c(9-12). The alpha and beta chains form an alternating ring which encloses part of the gamma chain. CF(1) is attached to CF(0) by a central stalk formed by the gamma and epsilon chains, while a peripheral stalk is formed by the delta and b chains.

The protein localises to the cell inner membrane. It catalyses the reaction ATP + H2O + 4 H(+)(in) = ADP + phosphate + 5 H(+)(out). In terms of biological role, produces ATP from ADP in the presence of a proton gradient across the membrane. The catalytic sites are hosted primarily by the beta subunits. The sequence is that of ATP synthase subunit beta from Thermotoga neapolitana (strain ATCC 49049 / DSM 4359 / NBRC 107923 / NS-E).